Consider the following 502-residue polypeptide: Probable mitochondrial-processing peptidase subunit alpha (502 aa).

It belongs to the peptidase M16 family. As to quaternary structure, heterodimer of mas2 (alpha) and mas1 (beta) subunits, forming the mitochondrial processing protease (MPP) in which mas2 is involved in substrate recognition and binding and mas1 is the catalytic subunit.

It is found in the mitochondrion matrix. Substrate recognition and binding subunit of the essential mitochondrial processing protease (MPP), which cleaves the mitochondrial sequence off newly imported precursors proteins. The sequence is that of Probable mitochondrial-processing peptidase subunit alpha (mas2) from Schizosaccharomyces pombe (strain 972 / ATCC 24843) (Fission yeast).